Here is a 186-residue protein sequence, read N- to C-terminus: ADP-ribosylation factor-like protein 8B (186 aa).

The note=Mediates targeting to membranes intramembrane region spans 1–19 (MLALISRLLDWFRSLFWKE). Residues 29-35 (QYSGKTT), 71-75 (DIGGQ), and 130-133 (NKRD) each bind GTP. Residue K141 forms a Glycyl lysine isopeptide (Lys-Gly) (interchain with G-Cter in ubiquitin) linkage.

This sequence belongs to the small GTPase superfamily. Arf family. As to quaternary structure, interacts with tubulin. Interacts with BORCS5; recruits ARL8B to lysosomes. Interacts with VPS41; the interaction mediates the recruitment of the HOPS complex to lysosomes. Interacts (GTP-bound form) with PLEKHM2 (via RUN domain); the interaction is required to recruit the motor protein kinesin-1 on lysosomes. Interacts (GTP-bound form) with PLEKHM1 (via RUN domain); the interaction is required for PLEKHM1 localization to lysosomes and for ARL8B function in delivery and degradation of endocytic and autophagic cargo in lysosomes. PLEKHM1 and PLEKHM2 compete for interaction with ARL8B. Interacts (GTP-bound form) with RUFY1; the interaction is required for RUFY1 endosomal location. When GTP-bound, interacts with RUFY3 and RUFY4, but not with RUFY1, nor RUFY2. In terms of processing, ubiquitinated at Lys-141 by RNF167, leading to its degradation.

It is found in the late endosome membrane. Its subcellular location is the lysosome membrane. It localises to the cytoplasm. The protein localises to the cytoskeleton. The protein resides in the spindle. It is found in the cell projection. Its subcellular location is the axon. It localises to the synapse. The protein localises to the cytolytic granule membrane. The protein resides in the early endosome membrane. It carries out the reaction GTP + H2O = GDP + phosphate + H(+). Small GTPase which cycles between active GTP-bound and inactive GDP-bound states. In its active state, binds to a variety of effector proteins playing a key role in the regulation of lysosomal positioning which is important for nutrient sensing, natural killer cell-mediated cytotoxicity and antigen presentation. Along with its effectors, orchestrates lysosomal transport and fusion. Localizes specifically to lysosomal membranes and mediates anterograde lysosomal motility by recruiting PLEKHM2, which in turn recruits the motor protein kinesin-1 on lysosomes. Required for lysosomal and cytolytic granule exocytosis. Critical factor involved in NK cell-mediated cytotoxicity. Drives the polarization of cytolytic granules and microtubule-organizing centers (MTOCs) toward the immune synapse between effector NK lymphocytes and target cells. In neurons, mediates the anterograde axonal long-range transport of presynaptic lysosome-related vesicles required for presynaptic biogenesis and synaptic function. Also acts as a regulator of endosome to lysosome trafficking pathways of special significance for host defense. Recruits RUFY1 onto early endosomes regulating endosomes to trans-Golgi network proteins retrieval. Regulates cargo trafficking to lysosomes by binding to PLEKHM1 and recruiting the HOPS subunit VPS41, resulting in functional assembly of the HOPS complex on lysosomal membranes. Plays an important role in cargo delivery to lysosomes for antigen presentation and microbial killing. Directs the intersection of CD1d with lipid antigens in lysosomes, and plays a role in intersecting phagosomes with lysosomes to generate phagolysosomes that kill microbes. Involved in the process of MHC II presentation. Regulates the delivery of antigens to lysosomes and the formation of MHC II-peptide complexes through the recruitment of the HOPS complex to lysosomes allowing the fusion of late endosomes to lysosomes. May play a role in chromosome segregation. The chain is ADP-ribosylation factor-like protein 8B (ARL8B) from Macaca fascicularis (Crab-eating macaque).